Here is a 429-residue protein sequence, read N- to C-terminus: Adenylosuccinate synthetase (429 aa).

GTP-binding positions include 12 to 18 and 40 to 42; these read GDEGKGK and GHT. Asp-13 serves as the catalytic Proton acceptor. Asp-13 and Gly-40 together coordinate Mg(2+). Residues 13-16, 38-41, Thr-130, Arg-144, Gln-225, Thr-240, and Arg-304 contribute to the IMP site; these read DEGK and NAGH. His-41 serves as the catalytic Proton donor. Position 300–306 (300–306) interacts with substrate; the sequence is ATTGRPR. GTP is bound by residues Arg-306, 332–334, and 414–416; these read KLD and SVG.

It belongs to the adenylosuccinate synthetase family. Homodimer. It depends on Mg(2+) as a cofactor.

It is found in the cytoplasm. It carries out the reaction IMP + L-aspartate + GTP = N(6)-(1,2-dicarboxyethyl)-AMP + GDP + phosphate + 2 H(+). The protein operates within purine metabolism; AMP biosynthesis via de novo pathway; AMP from IMP: step 1/2. Its function is as follows. Plays an important role in the de novo pathway of purine nucleotide biosynthesis. Catalyzes the first committed step in the biosynthesis of AMP from IMP. The protein is Adenylosuccinate synthetase of Syntrophobacter fumaroxidans (strain DSM 10017 / MPOB).